The following is a 419-amino-acid chain: Divinyl chlorophyllide a 8-vinyl-reductase, chloroplastic (419 aa).

The N-terminal 71 residues, 1 to 71 (MSICSTVGAG…PIVVSSTPVV (71 aa)), are a transit peptide targeting the chloroplast.

The protein localises to the plastid. It localises to the chloroplast. It catalyses the reaction protochlorophyllide a + NADP(+) = 3,8-divinyl protochlorophyllide a + NADPH + H(+). Its pathway is porphyrin-containing compound metabolism; chlorophyll biosynthesis. Its function is as follows. Catalyzes the conversion of divinyl chlorophyllide to monovinyl chlorophyllide. Reduces the 8-vinyl group of the tetrapyrrole to an ethyl group using NADPH as the reductant. The best substrate is (3,8-divinyl)-chlorophyllide a (DV-Chlidea). Very low activity with (3,8-divinyl)-protochlorophyllide a (DV-Pchlidea) and (3,8-divinyl)-magnesium-protoporphyrin IX monomethyl ester (DV-MPE). No activity with (3,8-divinyl)-magnesium-protoporphyrin IX (DV-Mg-Proto) and (3,8-divinyl)-chlorophyll a (DV-Chla). This Cucumis sativus (Cucumber) protein is Divinyl chlorophyllide a 8-vinyl-reductase, chloroplastic (DVR).